Consider the following 238-residue polypeptide: Purine nucleoside phosphorylase DeoD-type (238 aa).

Position 4 (histidine 4) interacts with a purine D-ribonucleoside. Residues glycine 20, arginine 24, arginine 43, and 87–90 contribute to the phosphate site; that span reads RVGS. Residues 179-181 and 203-204 contribute to the a purine D-ribonucleoside site; these read EME and SD. The active-site Proton donor is the aspartate 204.

It belongs to the PNP/UDP phosphorylase family. In terms of assembly, homohexamer; trimer of homodimers.

It carries out the reaction a purine D-ribonucleoside + phosphate = a purine nucleobase + alpha-D-ribose 1-phosphate. It catalyses the reaction a purine 2'-deoxy-D-ribonucleoside + phosphate = a purine nucleobase + 2-deoxy-alpha-D-ribose 1-phosphate. Its function is as follows. Catalyzes the reversible phosphorolytic breakdown of the N-glycosidic bond in the beta-(deoxy)ribonucleoside molecules, with the formation of the corresponding free purine bases and pentose-1-phosphate. The chain is Purine nucleoside phosphorylase DeoD-type from Actinobacillus succinogenes (strain ATCC 55618 / DSM 22257 / CCUG 43843 / 130Z).